Consider the following 60-residue polypeptide: UPF0434 protein SG0997 (60 aa).

The protein belongs to the UPF0434 family.

The polypeptide is UPF0434 protein SG0997 (Sodalis glossinidius (strain morsitans)).